The following is a 340-amino-acid chain: Cathepsin S (340 aa).

The signal sequence occupies residues 1 to 17 (MRAPGHAAIRWLFWMPL). The propeptide at 18–122 (VCSVAMEQLQ…VTFRSYSNRT (105 aa)) is activation peptide. The N-linked (GlcNAc...) asparagine glycan is linked to N120. Cystine bridges form between C134/C233, C144/C189, C178/C222, and C281/C329. Residue C147 is part of the active site. Catalysis depends on residues H287 and N307.

It belongs to the peptidase C1 family. In terms of tissue distribution, widely expressed with highest expression found in non-skeletal tissues. Relatively high levels found in skeletal tissues. Expressed in spleen, B cells, dendritic cells and macrophages.

It localises to the lysosome. It is found in the secreted. Its subcellular location is the cytoplasmic vesicle. The protein resides in the phagosome. It catalyses the reaction Similar to cathepsin L, but with much less activity on Z-Phe-Arg-|-NHMec, and more activity on the Z-Val-Val-Arg-|-Xaa compound.. Thiol protease. Key protease responsible for the removal of the invariant chain from MHC class II molecules and MHC class II antigen presentation. The bond-specificity of this proteinase is in part similar to the specificities of cathepsin L. This chain is Cathepsin S (Ctss), found in Mus musculus (Mouse).